We begin with the raw amino-acid sequence, 146 residues long: Putative ankyrin repeat protein FPV224 (146 aa).

ANK repeat units lie at residues 9–38, 42–79, 94–126, and 127–145; these read SLSTPLHHAINLLKTDIVSLLMQYKADASI, KGITPFCYAMYLGYYGVNKDILNIITRYNSINGTTRDI, YVFVNLHDAARLGYVYILKKIIYNGKNINRIDE, and YYYSALHYAVKSSNLKAVN.

The polypeptide is Putative ankyrin repeat protein FPV224 (Fowlpox virus (strain NVSL) (FPV)).